A 121-amino-acid polypeptide reads, in one-letter code: Dihydroneopterin aldolase (121 aa).

Substrate-binding residues include E25 and M114.

This sequence belongs to the archaeal dihydroneopterin aldolase family. Homotetramer.

The enzyme catalyses 7,8-dihydroneopterin = 6-hydroxymethyl-7,8-dihydropterin + glycolaldehyde. It functions in the pathway cofactor biosynthesis; 5,6,7,8-tetrahydromethanopterin biosynthesis. Catalyzes the conversion of 7,8-dihydroneopterin (H2Neo) to 6-hydroxymethyl-7,8-dihydropterin (6-HMD). This chain is Dihydroneopterin aldolase, found in Methanocaldococcus jannaschii (strain ATCC 43067 / DSM 2661 / JAL-1 / JCM 10045 / NBRC 100440) (Methanococcus jannaschii).